The sequence spans 148 residues: uncharacterized protein (148 aa).

The interval 55 to 148 is disordered; sequence KMRCGESGAG…RNQGQLYPQP (94 aa). Positions 68 to 104 are enriched in polar residues; that stretch reads RSNSAEVSSSQPALASKSQSKWGPTSNNPRGALTTTE.

This is an uncharacterized protein from Homo sapiens (Human).